The chain runs to 226 residues: Chalcone--flavanone isomerase 1B-1 (226 aa).

Substrate contacts are provided by Thr-50, Asn-115, and Thr-192.

The protein belongs to the chalcone isomerase family.

It catalyses the reaction a chalcone = a flavanone.. The protein operates within secondary metabolite biosynthesis; flavonoid biosynthesis. Catalyzes the intramolecular cyclization of bicyclic chalcones into tricyclic (S)-flavanones. Responsible for the isomerization of 4,2',4',6'-tetrahydroxychalcone (also termed chalcone) into naringenin. This is Chalcone--flavanone isomerase 1B-1 (CHI1B1) from Glycine max (Soybean).